The following is a 220-amino-acid chain: Flavin-dependent thymidylate synthase (220 aa).

Residues 1–208 (MKIDILDKGF…PWTFEAFLKY (208 aa)) form the ThyX domain. FAD contacts are provided by residues threonine 55, 78 to 80 (RHR), and glutamate 86. Residues 75–78 (QWFR), 86–90 (ELSGR), and arginine 147 contribute to the dUMP site. Residues 78 to 88 (RHRIASYNELS) carry the ThyX motif motif. Residues 163–165 (NAR) and asparagine 169 each bind FAD. Position 174 (arginine 174) interacts with dUMP. Arginine 174 functions as the Involved in ionization of N3 of dUMP, leading to its activation in the catalytic mechanism.

It belongs to the thymidylate synthase ThyX family. As to quaternary structure, homotetramer. It depends on FAD as a cofactor.

The catalysed reaction is dUMP + (6R)-5,10-methylene-5,6,7,8-tetrahydrofolate + NADPH + H(+) = dTMP + (6S)-5,6,7,8-tetrahydrofolate + NADP(+). The protein operates within pyrimidine metabolism; dTTP biosynthesis. Functionally, catalyzes the reductive methylation of 2'-deoxyuridine-5'-monophosphate (dUMP) to 2'-deoxythymidine-5'-monophosphate (dTMP) while utilizing 5,10-methylenetetrahydrofolate (mTHF) as the methyl donor, and NADPH and FADH(2) as the reductant. The polypeptide is Flavin-dependent thymidylate synthase (Thermotoga petrophila (strain ATCC BAA-488 / DSM 13995 / JCM 10881 / RKU-1)).